A 672-amino-acid polypeptide reads, in one-letter code: tRNA 5-methylaminomethyl-2-thiouridine biosynthesis bifunctional protein MnmC (672 aa).

The tRNA (mnm(5)s(2)U34)-methyltransferase stretch occupies residues 1 to 241 (MLKVTTAHIH…KRECLQGFKP (241 aa)). Positions 271–672 (IGGGISSLFS…RKLLKGTPVK (402 aa)) are FAD-dependent cmnm(5)s(2)U34 oxidoreductase.

This sequence in the N-terminal section; belongs to the methyltransferase superfamily. tRNA (mnm(5)s(2)U34)-methyltransferase family. The protein in the C-terminal section; belongs to the DAO family. FAD serves as cofactor.

Its subcellular location is the cytoplasm. The catalysed reaction is 5-aminomethyl-2-thiouridine(34) in tRNA + S-adenosyl-L-methionine = 5-methylaminomethyl-2-thiouridine(34) in tRNA + S-adenosyl-L-homocysteine + H(+). Its function is as follows. Catalyzes the last two steps in the biosynthesis of 5-methylaminomethyl-2-thiouridine (mnm(5)s(2)U) at the wobble position (U34) in tRNA. Catalyzes the FAD-dependent demodification of cmnm(5)s(2)U34 to nm(5)s(2)U34, followed by the transfer of a methyl group from S-adenosyl-L-methionine to nm(5)s(2)U34, to form mnm(5)s(2)U34. This Mannheimia succiniciproducens (strain KCTC 0769BP / MBEL55E) protein is tRNA 5-methylaminomethyl-2-thiouridine biosynthesis bifunctional protein MnmC.